A 403-amino-acid polypeptide reads, in one-letter code: Phosphopentomutase (403 aa).

D13, D298, H303, D339, H340, and H351 together coordinate Mn(2+).

It belongs to the phosphopentomutase family. The cofactor is Mn(2+).

Its subcellular location is the cytoplasm. The enzyme catalyses 2-deoxy-alpha-D-ribose 1-phosphate = 2-deoxy-D-ribose 5-phosphate. It carries out the reaction alpha-D-ribose 1-phosphate = D-ribose 5-phosphate. It participates in carbohydrate degradation; 2-deoxy-D-ribose 1-phosphate degradation; D-glyceraldehyde 3-phosphate and acetaldehyde from 2-deoxy-alpha-D-ribose 1-phosphate: step 1/2. Functionally, isomerase that catalyzes the conversion of deoxy-ribose 1-phosphate (dRib-1-P) and ribose 1-phosphate (Rib-1-P) to deoxy-ribose 5-phosphate (dRib-5-P) and ribose 5-phosphate (Rib-5-P), respectively. This chain is Phosphopentomutase, found in Streptococcus pneumoniae serotype 4 (strain ATCC BAA-334 / TIGR4).